We begin with the raw amino-acid sequence, 982 residues long: Protein phosphatase 1 regulatory subunit 12B (982 aa).

Residues 1–24 (MAELEHLGGKRAESARMRRAEQLR) are compositionally biased toward basic and acidic residues. A disordered region spans residues 1–50 (MAELEHLGGKRAESARMRRAEQLRRWRGSLTEQEPAERRGAGRQPLTRRG). The residue at position 29 (Ser-29) is a Phosphoserine. ANK repeat units lie at residues 57-86 (EDGA…DINT), 90-119 (DGLT…NVNQ), 123-152 (EGWT…SVGI), 216-245 (SGAT…ELNV), and 249-278 (DGWT…DMDI). 4 disordered regions span residues 342–517 (EETP…RESA), 556–579 (RTPH…SSTP), 606–864 (TDSS…EARE), and 918–948 (AQQK…KMSE). Residues 362-374 (SEEEEGEDEASES) show a composition bias toward acidic residues. Basic and acidic residues predominate over residues 375–385 (ETEKEADKKPE). Residues 389 to 401 (NHSNSESKSSITE) show a composition bias toward polar residues. A compositionally biased stretch (low complexity) spans 411–421 (FSASSARRFSS). Thr-445 is modified (phosphothreonine). Residues 466 to 478 (SSIYRSSSSPRIS) are compositionally biased toward low complexity. Residues 482-491 (DNKDKERENK) show a composition bias toward basic and acidic residues. The segment covering 623-632 (VRDEEAESLR) has biased composition (basic and acidic residues). Over residues 633–643 (KARSRQARQTR) the composition is skewed to basic residues. Thr-646 is modified (phosphothreonine). Positions 656–680 (EAERTFSRSRAERQAQEQPREKPTD) are enriched in basic and acidic residues. Positions 731–742 (TTPASPSTSRPS) are enriched in low complexity. Polar residues predominate over residues 743 to 755 (LYTSSHLLWTNRF). Residues 797–807 (ERRRPKERRRG) are compositionally biased toward basic residues. Thr-808 bears the Phosphothreonine mark. Over residues 824-836 (EEVKETWHERLSR) the composition is skewed to basic and acidic residues. Position 839 is a phosphoserine (Ser-839). Residues 840-849 (GGSNPTTSDS) show a composition bias toward polar residues. Basic and acidic residues-rich tracts occupy residues 850–864 (YGDR…EARE), 918–927 (AQQKQEKTSD), and 933–948 (EMEK…KMSE). Ser-947 is subject to Phosphoserine.

PP1 comprises a catalytic subunit, PPP1CA, PPP1CB or PPP1CC, and one or several targeting or regulatory subunits. PPP1R12B mediates binding to myosin. Isoform 3 and isoform 4 bind PPP1R12A, but not isoform 1 of PPP1R12B itself. Binds IL16. As to expression, detected in skeletal muscle, fetal and adult heart, brain, placenta, kidney, spleen, thymus, pancreas and lung. Isoform 3 and isoform 4 are heart specific.

The protein resides in the cytoplasm. It is found in the cytoskeleton. It localises to the stress fiber. Functionally, regulates myosin phosphatase activity. Augments Ca(2+) sensitivity of the contractile apparatus. This Homo sapiens (Human) protein is Protein phosphatase 1 regulatory subunit 12B (PPP1R12B).